A 127-amino-acid chain; its full sequence is Glycine cleavage system H protein (127 aa).

The 83-residue stretch at 22 to 104 folds into the Lipoyl-binding domain; sequence TVRIGITDFA…YDKAWMIVIE (83 aa). Position 63 is an N6-lipoyllysine (Lys-63).

This sequence belongs to the GcvH family. In terms of assembly, the glycine cleavage system is composed of four proteins: P, T, L and H. (R)-lipoate serves as cofactor.

The glycine cleavage system catalyzes the degradation of glycine. The H protein shuttles the methylamine group of glycine from the P protein to the T protein. Functionally, is also involved in protein lipoylation via its role as an octanoyl/lipoyl carrier protein intermediate. This Anoxybacillus flavithermus (strain DSM 21510 / WK1) protein is Glycine cleavage system H protein.